We begin with the raw amino-acid sequence, 139 residues long: Actin-depolymerizing factor 1 (139 aa).

The ADF-H domain maps to 5–139 (SSGLAVNDEC…SLDIVRSRTN (135 aa)).

This sequence belongs to the actin-binding proteins ADF family. Expressed in pollen.

In terms of biological role, actin-depolymerizing protein. Severs actin filaments (F-actin) and binds to actin monomers. The chain is Actin-depolymerizing factor 1 (ADF1) from Zea mays (Maize).